A 206-amino-acid polypeptide reads, in one-letter code: Isopentenyl-diphosphate Delta-isomerase (206 aa).

Positions 44 and 51 each coordinate Mn(2+). One can recognise a Nudix hydrolase domain in the interval 49-183 (ALHLAFSCHV…PWAFSPWLVL (135 aa)). Cys86 is an active-site residue. Position 86 (Cys86) interacts with Mg(2+). Position 88 (His88) interacts with Mn(2+). Glu106 is a Mg(2+) binding site. Residues Glu133 and Glu135 each coordinate Mn(2+). Glu135 is a catalytic residue.

This sequence belongs to the IPP isomerase type 1 family. The cofactor is Mg(2+). It depends on Mn(2+) as a cofactor.

It localises to the cytoplasm. The enzyme catalyses isopentenyl diphosphate = dimethylallyl diphosphate. Its pathway is isoprenoid biosynthesis; dimethylallyl diphosphate biosynthesis; dimethylallyl diphosphate from isopentenyl diphosphate: step 1/1. Functionally, catalyzes the 1,3-allylic rearrangement of the homoallylic substrate isopentenyl (IPP) to its highly electrophilic allylic isomer, dimethylallyl diphosphate (DMAPP). The sequence is that of Isopentenyl-diphosphate Delta-isomerase from Agromyces mediolanus (Corynebacterium mediolanum).